We begin with the raw amino-acid sequence, 175 residues long: MTSLQYPIGLYGPVENKTKEQLEAWIDQLAEIPQQYEAVTNQLTDAQLDTPYRTGGWTVRQLIHHVADSHLNAYLRFKLALTEETPHIRPYDQAGFAELPDSKAPISLSLPFISSLHRRWVTLLRGMTAEDFTASYYHPADQQTVSLYDATGMYVWHSTHHLAHITELIKRNQWN.

His65, His157, and His161 together coordinate Zn(2+).

The protein belongs to the metal hydrolase YfiT family. Homodimer. Requires Zn(2+) as cofactor.

Its subcellular location is the cytoplasm. Its function is as follows. Possible metal-dependent hydrolase. The protein is Putative metal-dependent hydrolase BPUM_0784 of Bacillus pumilus (strain SAFR-032).